Here is a 614-residue protein sequence, read N- to C-terminus: WD repeat-containing protein 26 (614 aa).

2 stretches are compositionally biased toward low complexity: residues Met-1–Gly-19 and Ser-34–Leu-44. Residues Met-1–Ser-65 are disordered. A LisH domain is found at Ala-67–Leu-99. A CTLH domain is found at Glu-100–Glu-184. WD repeat units lie at residues Glu-306–Lys-345, Gly-352–Arg-391, Ser-397–Glu-437, Gln-477–Lys-516, Gly-519–Glu-561, and Gly-564–Glu-604.

As to quaternary structure, forms homooligomers. Identified in the CTLH complex that contains at least MAEA, RMND5A (or alternatively its paralog RMND5B), GID8, WDR26, and RANBP9 and/or RANBP10. Interacts with DDB1-CUL4A/B E3 ligase complexes.

The protein localises to the cytoplasm. Its subcellular location is the nucleus. The protein resides in the mitochondrion. Its function is as follows. G-beta-like protein involved in cell signal transduction. Acts as a negative regulator in MAPK signaling pathway. Functions as a scaffolding protein to promote G beta:gamma-mediated PLCB2 plasma membrane translocation and subsequent activation in leukocytes. Core component of the CTLH E3 ubiquitin-protein ligase complex that mediates ubiquitination and subsequent proteasomal degradation of target proteins. Acts as a negative regulator of the canonical Wnt signaling pathway through preventing ubiquitination of beta-catenin CTNNB1 by the beta-catenin destruction complex, thus negatively regulating CTNNB1 degradation. Serves as a scaffold to coordinate PI3K/AKT pathway-driven cell growth and migration. Protects cells from oxidative stress-induced apoptosis via the down-regulation of AP-1 transcriptional activity as well as by inhibiting cytochrome c release from mitochondria. Also protects cells by promoting hypoxia-mediated autophagy and mitophagy. The chain is WD repeat-containing protein 26 (wdr26) from Xenopus tropicalis (Western clawed frog).